The sequence spans 144 residues: DNA polymerase III subunit chi (144 aa).

It belongs to the DNA polymerase III chi/HolC chain family. In terms of assembly, DNA polymerase III contains a core (composed of alpha, epsilon and theta chains) that associates with a tau subunit. This core dimerizes to form the POLIII' complex. PolIII' associates with the gamma complex (composed of gamma, delta, delta', psi and chi chains) and with the beta chain to form the complete DNA polymerase III complex. Interacts directly with the psi subunit (holD). The only subunit of the DNA polymerase III holoenzyme known to interact with single-stranded DNA binding protein (SSB), interacts directly with DNA helicase YoaA.

The catalysed reaction is DNA(n) + a 2'-deoxyribonucleoside 5'-triphosphate = DNA(n+1) + diphosphate. Its function is as follows. Part of the beta sliding clamp loading complex, which hydrolyzes ATP to load the beta clamp onto primed DNA to form the DNA replication pre-initiation complex. DNA polymerase III is a complex, multichain enzyme responsible for most of the replicative synthesis in bacteria. This DNA polymerase also exhibits 3' to 5' exonuclease activity. This subunit may stabilize YoaA and/or stimulate the helicase activity of YoaA. This is DNA polymerase III subunit chi (holC) from Haemophilus influenzae (strain ATCC 51907 / DSM 11121 / KW20 / Rd).